The primary structure comprises 125 residues: Histone H1-like protein Hc1 (125 aa).

A disordered region spans residues 98–125 (TKAKVKPTKKAAPKTKVKTAKKTRSTKK). The span at 100 to 125 (AKVKPTKKAAPKTKVKTAKKTRSTKK) shows a compositional bias: basic residues.

Belongs to the histone H1/H5 family. HCT subfamily.

Functionally, might have a role analogous to that of eukaryotic histone proteins. This is Histone H1-like protein Hc1 (hctA) from Chlamydia trachomatis serovar D (strain ATCC VR-885 / DSM 19411 / UW-3/Cx).